The sequence spans 302 residues: Acetyl-coenzyme A carboxylase carboxyl transferase subunit beta (302 aa).

A CoA carboxyltransferase N-terminal domain is found at 25 to 294; the sequence is VWTKCDSCGQ…PQEDIVTEAA (270 aa). Zn(2+)-binding residues include C29, C32, C48, and C51. The C4-type zinc-finger motif lies at 29 to 51; the sequence is CDSCGQVLYRAELERNLEVCPKC.

It belongs to the AccD/PCCB family. As to quaternary structure, acetyl-CoA carboxylase is a heterohexamer composed of biotin carboxyl carrier protein (AccB), biotin carboxylase (AccC) and two subunits each of ACCase subunit alpha (AccA) and ACCase subunit beta (AccD). Zn(2+) is required as a cofactor.

It localises to the cytoplasm. The enzyme catalyses N(6)-carboxybiotinyl-L-lysyl-[protein] + acetyl-CoA = N(6)-biotinyl-L-lysyl-[protein] + malonyl-CoA. The protein operates within lipid metabolism; malonyl-CoA biosynthesis; malonyl-CoA from acetyl-CoA: step 1/1. In terms of biological role, component of the acetyl coenzyme A carboxylase (ACC) complex. Biotin carboxylase (BC) catalyzes the carboxylation of biotin on its carrier protein (BCCP) and then the CO(2) group is transferred by the transcarboxylase to acetyl-CoA to form malonyl-CoA. In Erwinia tasmaniensis (strain DSM 17950 / CFBP 7177 / CIP 109463 / NCPPB 4357 / Et1/99), this protein is Acetyl-coenzyme A carboxylase carboxyl transferase subunit beta.